A 44-amino-acid polypeptide reads, in one-letter code: U17-ctenitoxin-Co1a (44 aa).

Intrachain disulfides connect Cys-3/Cys-20, Cys-10/Cys-26, Cys-19/Cys-40, and Cys-28/Cys-38.

As to expression, expressed by the venom gland.

The protein localises to the secreted. Omega-agatoxins are antagonists of voltage-sensitive calcium channels (Cav). Toxic to mice by intracerebroventricular injection. The chain is U17-ctenitoxin-Co1a from Ctenus ornatus (Brazilian spider).